Reading from the N-terminus, the 550-residue chain is CTP synthase (550 aa).

Residues 1–270 (MTKFVFVTGG…DRLICEELRL (270 aa)) are amidoligase domain. Serine 13 contributes to the CTP binding site. Serine 13 serves as a coordination point for UTP. Residues 14-19 (SLGKGI) and aspartate 71 each bind ATP. The Mg(2+) site is built by aspartate 71 and glutamate 144. Residues 151-153 (DIE), 191-196 (KTKPTQ), and lysine 227 contribute to the CTP site. UTP is bound by residues 191 to 196 (KTKPTQ) and lysine 227. A Glutamine amidotransferase type-1 domain is found at 295–547 (TIGMVGKYVD…VEAALAGQQR (253 aa)). Glycine 356 contacts L-glutamine. Cysteine 383 (nucleophile; for glutamine hydrolysis) is an active-site residue. L-glutamine-binding positions include 384–387 (LGMQ), glutamate 407, and arginine 473. Active-site residues include histidine 520 and glutamate 522.

This sequence belongs to the CTP synthase family. In terms of assembly, homotetramer.

It catalyses the reaction UTP + L-glutamine + ATP + H2O = CTP + L-glutamate + ADP + phosphate + 2 H(+). The catalysed reaction is L-glutamine + H2O = L-glutamate + NH4(+). It carries out the reaction UTP + NH4(+) + ATP = CTP + ADP + phosphate + 2 H(+). The protein operates within pyrimidine metabolism; CTP biosynthesis via de novo pathway; CTP from UDP: step 2/2. With respect to regulation, allosterically activated by GTP, when glutamine is the substrate; GTP has no effect on the reaction when ammonia is the substrate. The allosteric effector GTP functions by stabilizing the protein conformation that binds the tetrahedral intermediate(s) formed during glutamine hydrolysis. Inhibited by the product CTP, via allosteric rather than competitive inhibition. In terms of biological role, catalyzes the ATP-dependent amination of UTP to CTP with either L-glutamine or ammonia as the source of nitrogen. Regulates intracellular CTP levels through interactions with the four ribonucleotide triphosphates. The chain is CTP synthase from Cupriavidus pinatubonensis (strain JMP 134 / LMG 1197) (Cupriavidus necator (strain JMP 134)).